Consider the following 231-residue polypeptide: 5'-methylthioadenosine/S-adenosylhomocysteine nucleosidase (231 aa).

Catalysis depends on Glu12, which acts as the Proton acceptor. Substrate-binding positions include Gly78, Met153, and 174 to 175 (ME). Asp198 (proton donor) is an active-site residue.

It belongs to the PNP/UDP phosphorylase family. MtnN subfamily.

The enzyme catalyses S-adenosyl-L-homocysteine + H2O = S-(5-deoxy-D-ribos-5-yl)-L-homocysteine + adenine. The catalysed reaction is S-methyl-5'-thioadenosine + H2O = 5-(methylsulfanyl)-D-ribose + adenine. It catalyses the reaction 5'-deoxyadenosine + H2O = 5-deoxy-D-ribose + adenine. Its pathway is amino-acid biosynthesis; L-methionine biosynthesis via salvage pathway; S-methyl-5-thio-alpha-D-ribose 1-phosphate from S-methyl-5'-thioadenosine (hydrolase route): step 1/2. In terms of biological role, catalyzes the irreversible cleavage of the glycosidic bond in both 5'-methylthioadenosine (MTA) and S-adenosylhomocysteine (SAH/AdoHcy) to adenine and the corresponding thioribose, 5'-methylthioribose and S-ribosylhomocysteine, respectively. Also cleaves 5'-deoxyadenosine, a toxic by-product of radical S-adenosylmethionine (SAM) enzymes, into 5-deoxyribose and adenine. This chain is 5'-methylthioadenosine/S-adenosylhomocysteine nucleosidase, found in Bacillus thuringiensis subsp. konkukian (strain 97-27).